Reading from the N-terminus, the 486-residue chain is Ribulose bisphosphate carboxylase large chain 1 (486 aa).

Residues Asn-125 and Thr-175 each contribute to the substrate site. Residue Lys-177 is the Proton acceptor of the active site. Substrate is bound at residue Lys-179. 3 residues coordinate Mg(2+): Lys-203, Asp-205, and Glu-206. N6-carboxylysine is present on Lys-203. Residue His-295 is the Proton acceptor of the active site. Positions 296, 328, and 380 each coordinate substrate.

It belongs to the RuBisCO large chain family. Type I subfamily. As to quaternary structure, heterohexadecamer of 8 large chains and 8 small chains. Mg(2+) is required as a cofactor.

It catalyses the reaction 2 (2R)-3-phosphoglycerate + 2 H(+) = D-ribulose 1,5-bisphosphate + CO2 + H2O. The catalysed reaction is D-ribulose 1,5-bisphosphate + O2 = 2-phosphoglycolate + (2R)-3-phosphoglycerate + 2 H(+). RuBisCO catalyzes two reactions: the carboxylation of D-ribulose 1,5-bisphosphate, the primary event in carbon dioxide fixation, as well as the oxidative fragmentation of the pentose substrate. Both reactions occur simultaneously and in competition at the same active site. The chain is Ribulose bisphosphate carboxylase large chain 1 from Cereibacter sphaeroides (strain ATCC 17025 / ATH 2.4.3) (Rhodobacter sphaeroides).